We begin with the raw amino-acid sequence, 412 residues long: Argininosuccinate synthase (412 aa).

Residues 15 to 23 (AYSGGLDTS) and A42 each bind ATP. Y93 and S98 together coordinate L-citrulline. Residue G123 participates in ATP binding. The L-aspartate site is built by T125, N129, and D130. N129 provides a ligand contact to L-citrulline. The L-citrulline site is built by R133, S185, S194, E270, and Y282.

The protein belongs to the argininosuccinate synthase family. Type 1 subfamily. As to quaternary structure, homotetramer.

It is found in the cytoplasm. It carries out the reaction L-citrulline + L-aspartate + ATP = 2-(N(omega)-L-arginino)succinate + AMP + diphosphate + H(+). It functions in the pathway amino-acid biosynthesis; L-arginine biosynthesis; L-arginine from L-ornithine and carbamoyl phosphate: step 2/3. The protein is Argininosuccinate synthase of Psychrobacter arcticus (strain DSM 17307 / VKM B-2377 / 273-4).